We begin with the raw amino-acid sequence, 108 residues long: MRDMMNMMKKAKEMQEKMQKIQEEMANLQVTGTAGGGLVSITLNGKNTITAIKIDPSLLKPEEIEILEDLIMAAYNEAKTKIEIAMQEKTKSMTAGLPLPPDFKLPFS.

Belongs to the YbaB/EbfC family. Homodimer.

It is found in the cytoplasm. Its subcellular location is the nucleoid. Binds to DNA and alters its conformation. May be involved in regulation of gene expression, nucleoid organization and DNA protection. The sequence is that of Nucleoid-associated protein BH02310 from Bartonella henselae (strain ATCC 49882 / DSM 28221 / CCUG 30454 / Houston 1) (Rochalimaea henselae).